We begin with the raw amino-acid sequence, 139 residues long: Translation initiation factor 2 subunit beta (139 aa).

It belongs to the eIF-2-beta/eIF-5 family. In terms of assembly, heterotrimer composed of an alpha, a beta and a gamma chain.

Its function is as follows. eIF-2 functions in the early steps of protein synthesis by forming a ternary complex with GTP and initiator tRNA. This chain is Translation initiation factor 2 subunit beta, found in Saccharolobus solfataricus (strain ATCC 35092 / DSM 1617 / JCM 11322 / P2) (Sulfolobus solfataricus).